The chain runs to 262 residues: Autophagy-related protein 27 (262 aa).

Positions 1–20 (MLKMRLLLTWVLLVLPLVNA) are cleaved as a signal peptide. The 150-residue stretch at 21–170 (LKCANNRVLR…IIKGPSGCKK (150 aa)) folds into the MRH domain. At 21–185 (LKCANNRVLR…EDGDVEESSG (165 aa)) the chain is on the lumenal side. Cystine bridges form between Cys23–Cys61, Cys73–Cys80, and Cys139–Cys168. A helical transmembrane segment spans residues 186–206 (LSWFTWLFIYAIFFTVVYLVV). Over 207–262 (TSYTQTRGGSIDDFRHDFVERAKQFFTSLPAFVREVVSKVLGSAPNAAERGGYSAV) the chain is Cytoplasmic.

This sequence belongs to the ATG27 family.

The protein localises to the cytoplasmic vesicle membrane. Its subcellular location is the golgi apparatus membrane. The protein resides in the mitochondrion membrane. In terms of biological role, regulates the cytoplasm to vacuole transport (Cvt) vesicle formation. The sequence is that of Autophagy-related protein 27 (ATG27) from Vanderwaltozyma polyspora (strain ATCC 22028 / DSM 70294 / BCRC 21397 / CBS 2163 / NBRC 10782 / NRRL Y-8283 / UCD 57-17) (Kluyveromyces polysporus).